Here is a 173-residue protein sequence, read N- to C-terminus: Archaemetzincin (173 aa).

Residue His130 participates in Zn(2+) binding. Glu131 serves as the catalytic Proton acceptor. Zn(2+)-binding residues include His134, His140, Cys141, Cys146, Cys165, and Cys168.

Belongs to the peptidase M54 family. In terms of assembly, monomer. The cofactor is Zn(2+).

Functionally, probable zinc metalloprotease whose natural substrate is unknown. This Haloquadratum walsbyi (strain DSM 16790 / HBSQ001) protein is Archaemetzincin.